Reading from the N-terminus, the 502-residue chain is ATP synthase subunit alpha (502 aa).

An ATP-binding site is contributed by 169–176 (GDRQTGKT).

It belongs to the ATPase alpha/beta chains family. F-type ATPases have 2 components, CF(1) - the catalytic core - and CF(0) - the membrane proton channel. CF(1) has five subunits: alpha(3), beta(3), gamma(1), delta(1), epsilon(1). CF(0) has three main subunits: a(1), b(2) and c(9-12). The alpha and beta chains form an alternating ring which encloses part of the gamma chain. CF(1) is attached to CF(0) by a central stalk formed by the gamma and epsilon chains, while a peripheral stalk is formed by the delta and b chains.

Its subcellular location is the cell inner membrane. The catalysed reaction is ATP + H2O + 4 H(+)(in) = ADP + phosphate + 5 H(+)(out). Functionally, produces ATP from ADP in the presence of a proton gradient across the membrane. The alpha chain is a regulatory subunit. The chain is ATP synthase subunit alpha from Nitratidesulfovibrio vulgaris (strain DSM 19637 / Miyazaki F) (Desulfovibrio vulgaris).